A 3059-amino-acid polypeptide reads, in one-letter code: MATQVIMVGEFKILEVNCKPHAPVAAIHVPTQTPKTNDIKWADLEFTLAKSLQRQAHGVVKVDKHGTARIKRASKHHMSCLEQQMADEVAEKEAFMAAPTQLVTSIIFAGTTPPSMMETETIVKKIHTVGKRAKVMRKRSYITPPTDKSLRNHGVTPYSVQQLCRTLGNLSKRTGISLEVVGKTSKATKLRFTKTSFGHMARVQLKHHDGRMHRRDLVVDTSTTTIMQTLFLKTARTNANLDVLTHGSSGLVFWNYLVTGQRMRTRDNFIIVRGRCNGILVDARAKLSESTMLSTHHYSTGDVFWRGFNRTFLENKPINLDHVCSSDFSVEECGSIAALICQSLLPCGKITCRACAAKNLNMDEDTFKEFQTQRAREISAVIISEHPNFACVSQFIDRYFSHQRVLNPNVNAYREILKIVGGFTQSPYTHIQELNEILVLGGRATPEQLGSASAHLLEITRFVRNRTDNIKKGSLALFRNKISAKAHVNTALMCDNQLDRNGNLIWGERGYHAKRFFSNYFDIITPGGGYKQYIERRVPNGIRKLAIGNLIVTTNLEALREQLEGESIEKKAVTKACVSMSDNNYKYPCCCVTLDDGTPLYSTFIMPTKNHLVIGNSGDPKFLDLPADISTQMYIAKSGYCYINIFLAMLVNVDESDAKDFTKKVRDIIVPDLGEWPTLIDVATSCSLLSAFYPATSAAELPRILVDHDLKTMHVIDSYGSLNTGYHVLKANTIRQLIQFASNSLDSEMKHYRVGGTSNSQINGYATIKMLAKAVYRPKLMKEIIHEQPFMLVMSLMSPGILIALANSGALEMGIHHWIREGDSLVKMAHMLRTVAQNVSVARATWVQQEIISDSAQQMLETILNGTIPNVSYFQAIQYLTMLAASKEVDAEVRVTGYYTFKLQTSELLEKTYLSLLEDSWQELSYFGRFQAIRHSRRYCTAGTIVVKPERHVDLGGIYATSYQFALAKQMEYSKKAVCQAVNGLQARFNNITSQIYCKILNWPKRLFPDLVKFINTMLAITVALQLYIAFATILRHHQQCKQDSLELEYCKKERQLITLYDFFIAKQPYATEEEFMAHVDEQNPDLSNFAREYCAEVVLFQAKASEQVNFERIIAFISLVLMMFDRERSDCVYRSLTKLKSLMSTVENTVQFQSLDDIGPTLEEKNMTIDFDLDTDTIVGKSIIGHTFKEWWDVQLNTNRIVPHYRTEGHFMEFTRANAPTIAHQIAHDLHTDIMLRGAVGSGKSTGLPYHLSKKGTVLLLEPTRPLAENVTKQLKSDPFHVSPTLRMRGMAVFGSTPIHVMTTGFALHYLANNLKMLSTYDFIIIDEFHVHDSNAIALRNLLHEHNYQGKLIKVSATPPGREVEFSTQYPVEIRVEDQVSFQDFVKAQGNGSNLDLTSKCDNLLVYVASYNEVDQLSKLLLERHFLVTKVDGRSMKLGQVEIITKGSANKKHFIVATNIIENGVTLDIDAVIDFGMKVVPFLDSDNRMISYNKVSISYGERIQRLGRVGRNKAGVALRIGHTEKGISDVPVVIATQAAFLGFVYGLPISTQSVTTQVLSNVTLKQARTMVQFELPIFYMAHLVRYDGTMHPAIHNELKKYKLRDSEIQLRKLAIPSKCVPIWMTGKAYRLLTHNSQIPDDVRVPFLTKEIPDKLHENVWAIVEKFKCDAGIGRMTSAQASKVAYTLETDIHSVQRTILIIDQLLEREMQKQSHFEMVTNQSCSSGMLSLQTMMNAIQSRYAKNHTAGNIEILQRAKAQLLEFSNLSGDISTESALREFGYLEAVQFQSGTQVSNFLGLEGHWKKSLITKDLLIVGGVCVGAAWMIGEYFFKKSKGVVAFQGIISDRGKKLKFARARDEKMGHYVEAPDSTLEHYFGSAYTKKGKTKGKTHGMGKKNHRFVNMYGFDPSDYTFIRYVDPLTGYTLDESPYTDIRLIQSQFSDIREQQLLNDELERNMVHYKPGVQGYLVKDKTSQILKIDLTPHIPLKVCDATNNIAGHPDREGELRQTGKGQLLDYAELPQKKESVEFESTSMFRGVRDYNPISSVICQLENESEGRTTQLFGLGFGPFIITNQHLFVRNNGSLTVRSQMGVFKVNSTVALQMRPVEGRDVLIIKMPKDFPPFPQRLKFRQPTHSEKVCLILTNFQQKSSSSMVSETSILYQRKNTYFWKHWISTKEGHCGSPIVSTTDGAILGIHSLSNMTNTSNYFACFPKGFTETYLATESVHEWVKGWKFNANNVCWGSFHLQDSKPTKEFKTVKLVTDLLGEAVYTQGCDSKWLFNAAHTNIQAVAQLESNLVTKHTVKGKCKLFETYLNVDKAAHDFFSKYMGFYKPSKLNREAYTQDLMKYSKVIQVGEVDCGVFESALTGLLHNLGRWGFTTACYTTDEDSIYTALNMKAAVGALYRGKKRDYFDAMSPSEREHLLFLSCKRLYFGQLGVWNGSLKAELRPKEKVDLNKTRTFTAAPIETLLGGKVCVDDFNNMFYSLHLKAPWSVGMTKFYGTWNQLMCKLPDDWVYCDADGSQFDSSISPYMINAVLRIRLHFMEDWDIGSQMLQNLYTEIGTHQSQHQMAQLLKKFKGNNSGQPSTVVDNTLLVVLALHYALLKSGIPLEEQDSVCAYGVNGDDLLIAIRPDMEHKLDGFQALFSELGLNYEFNSRSKDKKDLWFMSHKAIQCGEILIPKLEEERIVSILEWDRSHEPIHRLEAICASMVESWGYPELTHEIRRFYAWVLEQSPYNALATTGLAPYIAESALKTLYTNVHPTSTELEKYSIQFDEQMDEEDDMVYFQAETLDASEALAQKSEGRKKERESNSSKAVAVKDKDVDLGTAGTHSVPRLKSMTSKLTLPMLKGKSVVNLDHLLSYKPKQVDLSNARATHEQFQNWYDGVMASYELEESSMEIILNGFMVWCIENGTSPDINGVWTMMDNEEQVSYPLKPMLDHAKPSLRQIMRHFSALAEAYIEMRSREKPYMPRYGLQRNLRDQSLARYAFDFYEITATTPIRAKEAHLQMKAAALKNSNTNMFGLDGNVTTSEEDTERHTATDVNRNMHHLLGVKGV.

The 145-residue stretch at 154–298 folds into the Peptidase S30 domain; that stretch reads GVTPYSVQQL…ESTMLSTHHY (145 aa). Residues histidine 207, aspartate 216, and serine 249 each act as for P1 proteinase activity in the active site. The short motif at 349–352 is the Involved in interaction with stylet and aphid transmission element; the sequence is KITC. The short motif at 607-609 is the Involved in virions binding and aphid transmission element; that stretch reads PTK. The region spanning 633–755 is the Peptidase C6 domain; sequence MYIAKSGYCY…DSEMKHYRVG (123 aa). Active-site for helper component proteinase activity residues include cysteine 641 and histidine 714. The Helicase ATP-binding domain maps to 1226–1378; that stretch reads QIAHDLHTDI…TQYPVEIRVE (153 aa). 1239–1246 provides a ligand contact to ATP; that stretch reads GAVGSGKS. The DEFH box signature appears at 1328 to 1331; it reads DEFH. A Helicase C-terminal domain is found at 1397-1556; sequence DLTSKCDNLL…GLPISTQSVT (160 aa). Positions 1883 to 1890 match the Nuclear localization signal motif; sequence KKGKTKGK. Tyrosine 1905 bears the O-(5'-phospho-RNA)-tyrosine mark. Residues 2032-2250 form the Peptidase C4 domain; it reads STSMFRGVRD…VCWGSFHLQD (219 aa). Catalysis depends on for nuclear inclusion protein A activity residues histidine 2077, aspartate 2112, and cysteine 2182. A RdRp catalytic domain is found at 2516 to 2640; sequence WVYCDADGSQ…AIRPDMEHKL (125 aa). Threonine 3042 is subject to Phosphothreonine.

It belongs to the potyviridae genome polyprotein family. Interacts with host eIF4E protein (via cap-binding region); this interaction mediates the translation of the VPg-viral RNA conjugates. Part of a complex that comprises VPg, RNA, host EIF4E and EIF4G; this interaction mediates the translation of the VPg-viral RNA conjugates. Post-translationally, VPg is uridylylated by the polymerase and is covalently attached to the 5'-end of the genomic RNA. This uridylylated form acts as a nucleotide-peptide primer for the polymerase. Phosphorylation inhibits the RNA-binding capacity of the capsid protein. In terms of processing, potyviral RNA is expressed as two polyproteins which undergo post-translational proteolytic processing. Genome polyprotein is processed by NIa-pro, P1 and HC-pro proteinases resulting in the production of at least ten individual proteins. P3N-PIPO polyprotein is cleaved by P1 and HC-pro proteinases resulting in the production of three individual proteins. The P1 proteinase and the HC-pro cleave only their respective C-termini autocatalytically. 6K1 is essential for proper proteolytic separation of P3 from CI.

The protein resides in the host cytoplasmic vesicle. The protein localises to the host nucleus. It is found in the virion. The catalysed reaction is RNA(n) + a ribonucleoside 5'-triphosphate = RNA(n+1) + diphosphate. The enzyme catalyses Hydrolyzes glutaminyl bonds, and activity is further restricted by preferences for the amino acids in P6 - P1' that vary with the species of potyvirus, e.g. Glu-Xaa-Xaa-Tyr-Xaa-Gln-|-(Ser or Gly) for the enzyme from tobacco etch virus. The natural substrate is the viral polyprotein, but other proteins and oligopeptides containing the appropriate consensus sequence are also cleaved.. It catalyses the reaction Hydrolyzes a Gly-|-Gly bond at its own C-terminus, commonly in the sequence -Tyr-Xaa-Val-Gly-|-Gly, in the processing of the potyviral polyprotein.. In terms of biological role, required for aphid transmission and also has proteolytic activity. Only cleaves a Gly-Gly dipeptide at its own C-terminus. Interacts with virions and aphid stylets. Acts as a suppressor of RNA-mediated gene silencing, also known as post-transcriptional gene silencing (PTGS), a mechanism of plant viral defense that limits the accumulation of viral RNAs. May have RNA-binding activity. Functionally, has helicase activity. It may be involved in replication. Its function is as follows. Indispensable for virus replication. Reduces the abundance of host transcripts related to jasmonic acid biosynthesis therefore altering the host defenses. In order to increase its own stability, decreases host protein degradation pathways. Indispensable for virus replication. In terms of biological role, mediates the cap-independent, EIF4E-dependent translation of viral genomic RNAs. Binds to the cap-binding site of host EIF4E and thus interferes with the host EIF4E-dependent mRNA export and translation. VPg-RNA directly binds EIF4E and is a template for transcription. Also forms trimeric complexes with EIF4E-EIF4G, which are templates for translation. Functionally, has RNA-binding and proteolytic activities. Its function is as follows. An RNA-dependent RNA polymerase that plays an essential role in the virus replication. Involved in aphid transmission, cell-to-cell and systemis movement, encapsidation of the viral RNA and in the regulation of viral RNA amplification. The polypeptide is Genome polyprotein (Potato virus A (PVA)).